A 106-amino-acid polypeptide reads, in one-letter code: UPF0145 protein NE1032 (106 aa).

Belongs to the UPF0145 family.

This Nitrosomonas europaea (strain ATCC 19718 / CIP 103999 / KCTC 2705 / NBRC 14298) protein is UPF0145 protein NE1032.